We begin with the raw amino-acid sequence, 218 residues long: Large ribosomal subunit protein bL25 (218 aa).

The interval 197–218 (PAEESGEKPVAHIEEKESTEKE) is disordered. Over residues 201–218 (SGEKPVAHIEEKESTEKE) the composition is skewed to basic and acidic residues.

The protein belongs to the bacterial ribosomal protein bL25 family. CTC subfamily. In terms of assembly, part of the 50S ribosomal subunit; part of the 5S rRNA/L5/L18/L25 subcomplex. Contacts the 5S rRNA. Binds to the 5S rRNA independently of L5 and L18.

Functionally, this is one of the proteins that binds to the 5S RNA in the ribosome where it forms part of the central protuberance. The polypeptide is Large ribosomal subunit protein bL25 (Dehalococcoides mccartyi (strain ATCC BAA-2100 / JCM 16839 / KCTC 5957 / BAV1)).